We begin with the raw amino-acid sequence, 624 residues long: Galactan 5-O-arabinofuranosyltransferase (624 aa).

The next 13 helical transmembrane spans lie at 5-25 (VLGQMVLAVLMASAVAGVAIA), 43-63 (ALTTVGQFGCLAGLFAAGLLW), 73-93 (LGALAFISAFSVVTLAMPLGA), 127-147 (IGLPPFYPAGWFWLGGRIAAA), 159-179 (WSIVSITIAVALALVLWAAMI), 181-201 (FEYALVATAASTAAMLAYAST), 203-223 (PYAAIITVLMPPVFVLAWAGL), 234-254 (AIVGVGIFLGVAALFYTLLLV), 280-300 (LAVIAVISGAIALLTWAPYLL), 326-346 (FPMFSLTLHGALCMLGTVWLV), 355-375 (AGALAVAVVAVYAWSLLSMLT), 391-411 (LTVLLTTAGAFGFIEATLAIA), and 422-442 (VVAAATAVGAIGAVTFSQDIP).

This sequence belongs to the glycosyltransferase 85 family.

It is found in the cell membrane. It catalyses the reaction Adds an alpha-D-arabinofuranosyl group from trans,octacis-decaprenylphospho-beta-D-arabinofuranose at the 5-O-position of the eighth, tenth and twelfth galactofuranose unit of the galactofuranan chain of [beta-D-galactofuranosyl-(1-&gt;5)-beta-D-galactofuranosyl-(1-&gt;6)]14-beta-D-galactofuranosyl-(1-&gt;5)-beta-D-galactofuranosyl-(1-&gt;4)-alpha-L-rhamnopyranosyl-(1-&gt;3)-N-acetyl-alpha-D-glucosaminyl-diphospho-trans,octacis-decaprenol.. It participates in cell wall biogenesis; cell wall polysaccharide biosynthesis. Functionally, involved in the biosynthesis of the arabinogalactan (AG) region of the mycolylarabinogalactan-peptidoglycan (mAGP) complex, an essential component of the mycobacterial cell wall. Catalyzes the addition of the first key arabinofuranosyl (Araf) residue from the sugar donor decaprenyl-phospho-arabinose (DPA) on the C-5 of a 6-linked galactofuranosyl (Galf) of the galactan domain, thus 'priming' the galactan for further elaboration by other arabinofuranosyltransferases. It is not able to add an Araf residue to a terminal Galf. The protein is Galactan 5-O-arabinofuranosyltransferase of Mycolicibacterium smegmatis (strain ATCC 700084 / mc(2)155) (Mycobacterium smegmatis).